Reading from the N-terminus, the 361-residue chain is DNA replication and repair protein RecF (361 aa).

30-37 (GDNAQGKT) lines the ATP pocket.

This sequence belongs to the RecF family.

The protein localises to the cytoplasm. Functionally, the RecF protein is involved in DNA metabolism; it is required for DNA replication and normal SOS inducibility. RecF binds preferentially to single-stranded, linear DNA. It also seems to bind ATP. The polypeptide is DNA replication and repair protein RecF (Clostridium perfringens (strain ATCC 13124 / DSM 756 / JCM 1290 / NCIMB 6125 / NCTC 8237 / Type A)).